A 95-amino-acid polypeptide reads, in one-letter code: Complement inhibitor RaCI5 (95 aa).

A signal peptide spans M1 to S21. Intrachain disulfides connect C35/C59, C40/C61, and C55/C76.

Belongs to the RaCI family. As to expression, expressed in salivary glands.

It is found in the secreted. Its function is as follows. Complement inhibitor. Prevents complement-mediated C5 activation by binding to C5. Binds C5 at a different binding site than the other tick complement inhibitors OmCI and CirpT1, and the drug eculizumab. The chain is Complement inhibitor RaCI5 from Rhipicephalus appendiculatus (Brown ear tick).